The chain runs to 517 residues: Crotonobetaine/carnitine--CoA ligase (517 aa).

It belongs to the ATP-dependent AMP-binding enzyme family.

The catalysed reaction is 4-(trimethylamino)butanoate + ATP + CoA = 4-(trimethylamino)butanoyl-CoA + AMP + diphosphate. It carries out the reaction crotonobetaine + ATP + CoA = crotonobetainyl-CoA + AMP + diphosphate. The enzyme catalyses (R)-carnitine + ATP + CoA = (R)-carnitinyl-CoA + AMP + diphosphate. It functions in the pathway amine and polyamine metabolism; carnitine metabolism. Functionally, catalyzes the transfer of CoA to carnitine, generating the initial carnitinyl-CoA needed for the CaiB reaction cycle. Also has activity toward crotonobetaine and gamma-butyrobetaine. The chain is Crotonobetaine/carnitine--CoA ligase from Escherichia coli O45:K1 (strain S88 / ExPEC).